Reading from the N-terminus, the 1196-residue chain is MDTKPKTTTTVKVPPGPMGYVYGRACPAEGLELLSLLSARSGDADVAVAPLIVGLTVESGFEANVAAVVGSRTTGLGGTAVSLKLMPSHYSPSVYVFHGGRHLAPSTQAPNLTRLCERARPHFGFADYAPRPCDLKHETTGDALCERLGLDPDRALLYLVITEGFREAVCISNTFLHLGGMDKVTIGDAEVHRIPVYPLQMFMPDFSRVIADPFNCNHRSIGENFNYPLPFFNRPLARLLFEAVVGPAAVALRARNVDAVARAAAHLAFDENHEGAALPADITFTAFEASQGKPQRGARDAGNKGPAGGFEQRLASVMAGDAALALESIVSMAVFDEPPPDITTWPLLEGQETPAARAGAVGAYLARAAGLVGAMVFSTNSALHLTEVDDAGPADPKDHSKPSFYRFFLVPGTHVAANPQLDREGHVVPGYEGRPTAPLVGGTQEFAGEHLAMLCGFSPALLAKMLFYLERCDGGVIVGRQEMDVFRYVADSGQTDVPCNLCTFETRHACAHTTLMRLRARHPKFASAARGAIGVFGTMNSAYSDCDVLGNYAAFSALKRADGSENTRTIMQETYRAATERVMAELEALQYVDQAVPTALGRLETIIGNREALHTVVNNIKQLVDREVEQLMRNLIEGRNFKFRDGLAEANHAMSLSLDPYTCGPCPLLQLLARRSNLAVYQDLALSQCHGVFAGQSVEGRNFRNQFQPVLRRRVMDLFNNGFLSAKTLTVALSEGAAICAPSLTAGQTAPAESSFEGDVARVTLGFPKELRVKSRVLFAGASANASEAAKARVASLQSAYQKPDKRVDILLGPLGFLLKQFHAVIFPNGKPPGSNQPNPQWFWTALQRNQLPARLLSREDIETIAFIKRFSLDYGAINFINLAPNNVSELAMYYMANQILRYCDHSTYFINTLTAVIAGSRRPPSVQAAAAWAPQGGAGLEAGARALMDSLDAHPGAWTSMFASCNLLRPVMAARPMVVLGLSISKYYGMAGNDRVFQAGNWASLLGGKNACPLLIFDRTRKFVLACPRAGFVCAASSLGGGAHEHSLCEQLRGIIAEGGAAVASSVFVATVKSLGPRTQQLQIEDWLALLEDEYLSEEMMEFTTRALERGHGEWSTDAALEVAHEAEALVSQLGAAGEVFNFGDFGDEDDHAASFGGLAAAAGAAGVARKRAFHGDDPFGEGPPEKKDLTLDML.

Residues cysteine 499–histidine 512 fold into a zinc finger. 2 consecutive short sequence motifs (required for filament formation) follow at residues phenylalanine 843–tryptophan 844 and phenylalanine 1142–phenylalanine 1144. The required for nuclear localization stretch occupies residues arginine 1171 to leucine 1196. The interval histidine 1176 to leucine 1196 is disordered.

It belongs to the herpesviridae major DNA-binding protein family. As to quaternary structure, homooligomers. Forms double-helical filaments necessary for the formation of replication compartments within the host nucleus. Interacts with the origin-binding protein. Interacts with the helicase primase complex; this interaction stimulates primer synthesis activity of the helicase-primase complex. Interacts with the DNA polymerase. Interacts with the alkaline exonuclease; this interaction increases its nuclease processivity.

It localises to the host nucleus. Plays several crucial roles in viral infection. Participates in the opening of the viral DNA origin to initiate replication by interacting with the origin-binding protein. May disrupt loops, hairpins and other secondary structures present on ssDNA to reduce and eliminate pausing of viral DNA polymerase at specific sites during elongation. Promotes viral DNA recombination by performing strand-transfer, characterized by the ability to transfer a DNA strand from a linear duplex to a complementary single-stranded DNA circle. Can also catalyze the renaturation of complementary single strands. Additionally, reorganizes the host cell nucleus, leading to the formation of prereplicative sites and replication compartments. This process is driven by the protein which can form double-helical filaments in the absence of DNA. This is Major DNA-binding protein from Human herpesvirus 2 (strain HG52) (HHV-2).